A 331-amino-acid chain; its full sequence is MTKANPFAALKWLSLAPALLLGGCDMTLFNPKGQVGMDERTLIITATLLMLIVVIPVIVMTLAFAWKYRASNTQAEYKPDWHHSNRIEAVVWLVPCVIIAILGWITWESTHKLDPYRPLDSEVKPVTIQAVSLDWKWLFIYPEQGIATVNEIAFPKDTPVNFQITSDSVMNSFFIPQLGSQIYSMAGMMTKLHLIANEEGVFDGISANYSGGGFSGMRFKAIATSEQGFQDWVAKVKAAPASLSIGTYPELVKPSENVPPTYFSSVSPELFGHILTKYEHHGDAKGAAHGEHAGAEHEAAMTGHDMQDMDMQAMQGMKDMKDMHMQPSTQE.

An N-terminal signal peptide occupies residues 1-23; it reads MTKANPFAALKWLSLAPALLLGG. Cys-24 carries N-palmitoyl cysteine lipidation. A lipid anchor (S-diacylglycerol cysteine) is attached at Cys-24. The Periplasmic portion of the chain corresponds to 24–41; it reads CDMTLFNPKGQVGMDERT. The helical transmembrane segment at 42–62 threads the bilayer; that stretch reads LIITATLLMLIVVIPVIVMTL. Residues 63 to 86 are Cytoplasmic-facing; it reads AFAWKYRASNTQAEYKPDWHHSNR. A helical membrane pass occupies residues 87–107; sequence IEAVVWLVPCVIIAILGWITW. Topologically, residues 108–331 are periplasmic; sequence ESTHKLDPYR…DMHMQPSTQE (224 aa).

It belongs to the cytochrome c oxidase subunit 2 family. Heterooctamer of two A chains, two B chains, two C chains and two D chains.

The protein resides in the cell inner membrane. In terms of biological role, cytochrome bo(3) ubiquinol terminal oxidase is the component of the aerobic respiratory chain of E.coli that predominates when cells are grown at high aeration. Has proton pump activity across the membrane in addition to electron transfer, pumping 2 protons/electron. The protein is Cytochrome bo(3) ubiquinol oxidase subunit 2 (cyoA) of Pseudomonas aeruginosa (strain ATCC 15692 / DSM 22644 / CIP 104116 / JCM 14847 / LMG 12228 / 1C / PRS 101 / PAO1).